The primary structure comprises 1046 residues: Piwi-like protein 2 (1046 aa).

The span at 1–12 (MDPKRPTFPSPP) shows a compositional bias: pro residues. A disordered region spans residues 1 to 35 (MDPKRPTFPSPPGVIRAPWQQSTEDQSQLLDQPSL). Residues 19–31 (WQQSTEDQSQLLD) show a composition bias toward polar residues. The PAZ domain occupies 462-575 (SVLDVMNLIY…LLPELSFMTG (114 aa)). The Piwi domain occupies 741 to 1032 (LVVCIMTGNR…LAFLSGQYLH (292 aa)). Residues aspartate 818, glutamate 856, aspartate 888, and histidine 1021 contribute to the active site.

This sequence belongs to the argonaute family. Piwi subfamily. As to quaternary structure, component of the PET complex. Mg(2+) is required as a cofactor. Methylated on arginine residues; required for the interaction with Tudor domain-containing protein and subsequent localization to the meiotic nuage, also named P granule. In terms of tissue distribution, detected in primordial germ cells (PGCs) from 3 dpf. In adult, it is found in both the female and male gonad. In the ovary, it is present in all stages of germ cell differentiation. In testis, it is present in mitotic and meiotic germ cells. No protein has been detected in the fully differentiated sperm cell.

It is found in the cytoplasm. The protein localises to the nucleus. Its function is as follows. Endoribonuclease that plays a central role during spermatogenesis by repressing transposable elements and preventing their mobilization, which is essential for the germline integrity. Plays an essential role in germ cell differentiation and meiosis, independently of the function in transposable elements repression. Acts via the piRNA metabolic process, which mediates the repression of transposable elements during meiosis by forming complexes composed of piRNAs and Piwi proteins and govern the methylation and subsequent repression of transposons. During piRNA biosynthesis, plays a key role in the piRNA amplification loop, also named ping-pong amplification cycle, by acting as a 'slicer-competent' piRNA endoribonuclease that cleaves primary piRNAs, which are then loaded onto 'slicer-incompetent' piwil4. Piwil2 slicing produces a pre-miRNA intermediate, which is then processed in mature piRNAs, and as well as a 16 nucleotide by-product that is degraded. Required for piwil4/miwi2 nuclear localization and association with secondary piRNAs antisense. Represses circadian rhythms by promoting the stability and activity of core clock components BMAL1 and CLOCK. The chain is Piwi-like protein 2 (piwil2) from Danio rerio (Zebrafish).